The chain runs to 381 residues: Lipid-A-disaccharide synthase (381 aa).

It belongs to the LpxB family.

The catalysed reaction is 2-N,3-O-bis[(3R)-3-hydroxytetradecanoyl]-alpha-D-glucosaminyl 1-phosphate + UDP-2-N,3-O-bis[(3R)-3-hydroxytetradecanoyl]-alpha-D-glucosamine = lipid A disaccharide (E. coli) + UDP + H(+). The enzyme catalyses a lipid X + a UDP-2-N,3-O-bis[(3R)-3-hydroxyacyl]-alpha-D-glucosamine = a lipid A disaccharide + UDP + H(+). It functions in the pathway glycolipid biosynthesis; lipid IV(A) biosynthesis; lipid IV(A) from (3R)-3-hydroxytetradecanoyl-[acyl-carrier-protein] and UDP-N-acetyl-alpha-D-glucosamine: step 5/6. In terms of biological role, condensation of UDP-2,3-diacylglucosamine and 2,3-diacylglucosamine-1-phosphate to form lipid A disaccharide, a precursor of lipid A, a phosphorylated glycolipid that anchors the lipopolysaccharide to the outer membrane of the cell. The sequence is that of Lipid-A-disaccharide synthase from Erwinia tasmaniensis (strain DSM 17950 / CFBP 7177 / CIP 109463 / NCPPB 4357 / Et1/99).